The primary structure comprises 541 residues: Protein MGF 505-10R (541 aa).

The protein belongs to the asfivirus MGF 505 family.

Its function is as follows. Plays a role in virus cell tropism, and may be required for efficient virus replication in macrophages. The protein is Protein MGF 505-10R of Ornithodoros (relapsing fever ticks).